The sequence spans 423 residues: Glutamyl-tRNA reductase (423 aa).

Substrate is bound by residues 49 to 52, Ser-111, 116 to 118, and Gln-122; these read TCNR and EPQ. Cys-50 serves as the catalytic Nucleophile. Position 191-196 (191-196) interacts with NADP(+); it reads GAGEMS.

It belongs to the glutamyl-tRNA reductase family. In terms of assembly, homodimer.

The enzyme catalyses (S)-4-amino-5-oxopentanoate + tRNA(Glu) + NADP(+) = L-glutamyl-tRNA(Glu) + NADPH + H(+). It participates in porphyrin-containing compound metabolism; protoporphyrin-IX biosynthesis; 5-aminolevulinate from L-glutamyl-tRNA(Glu): step 1/2. Its function is as follows. Catalyzes the NADPH-dependent reduction of glutamyl-tRNA(Glu) to glutamate 1-semialdehyde (GSA). In Syntrophus aciditrophicus (strain SB), this protein is Glutamyl-tRNA reductase.